The sequence spans 458 residues: Selection and upkeep of intraepithelial T-cells protein 3 (458 aa).

Positions 1-24 (MGSIQIIFAAYCVVLCVLQMLVLS) are cleaved as a signal peptide. The Extracellular segment spans residues 25-237 (SEQFTITGLE…ESISIVLTGD (213 aa)). The 116-residue stretch at 26–141 (EQFTITGLER…EEHITEVKVT (116 aa)) folds into the Ig-like V-type domain. 2 disulfides stabilise this stretch: cysteine 49-cysteine 123 and cysteine 163-cysteine 217. An Ig-like C1-type domain is found at 142–231 (ATSSDIKIIM…LLTHQEESIS (90 aa)). The N-linked (GlcNAc...) asparagine glycan is linked to asparagine 200. A helical transmembrane segment spans residues 238–258 (LFSWKIDWILILSIIACVMIP). At 259–283 (YSMTSYLQQHLIHGSCSQRSHHWRK) the chain is on the cytoplasmic side. Residues 284 to 304 (NAMVCMSSVIAIIGSMLILHL) form a helical membrane-spanning segment. The Extracellular portion of the chain corresponds to 305–324 (KQRVPISDQHFELDTLYLED). A helical membrane pass occupies residues 325 to 345 (ISVILCVVIVFNLKLNLLTYY). The Cytoplasmic portion of the chain corresponds to 346–359 (RLERKYDGCTPGCK). The chain crosses the membrane as a helical span at residues 360–380 (ACFYILKIIIIILPFVFTFGC). The Extracellular portion of the chain corresponds to 381–414 (YNAIFLKYHQLQKKVSIPDPLYYFYTSWLVNMEM). The helical transmembrane segment at 415–435 (LGVFLVFFPTFINLIEFSQFI) threads the bilayer. The Cytoplasmic portion of the chain corresponds to 436–458 (KTVPKPIWLCQENMREDDAIRHR).

This sequence belongs to the SKINT family. As to expression, expressed in skin and thymus.

Its subcellular location is the membrane. Its function is as follows. May act by engaging a cell surface molecule on immature T-cells in the embryonic thymus. This Mus musculus (Mouse) protein is Selection and upkeep of intraepithelial T-cells protein 3 (Skint3).